A 201-amino-acid polypeptide reads, in one-letter code: Akirin-2 (201 aa).

Serine 18 and serine 21 each carry phosphoserine. The short motif at 23-28 (KRRRCA) is the Nuclear localization signal element. A Phosphoserine modification is found at serine 55. The SYVS motif signature appears at 198–201 (SYVS).

It belongs to the akirin family. Homodimer. Interacts with IPO9; the interaction is direct. Associates with 20S and 26S proteasomes. Interacts with SMARCD1; promoting SWI/SNF complex recruitment. Interacts with NFKBIZ. Interacts with YWHAB. Polyubiquitinated. Polyubiquitination is dependent of UBR5 that extends pre-ubiquitinated AKIRIN2.

The protein resides in the nucleus. Its subcellular location is the cytoplasm. The protein localises to the membrane. In terms of biological role, molecular adapter that acts as a bridge between a variety of multiprotein complexes, and which is involved in embryonic development, immunity, myogenesis and brain development. Plays a key role in nuclear protein degradation by promoting import of proteasomes into the nucleus: directly binds to fully assembled 20S proteasomes at one end and to nuclear import receptor IPO9 at the other end, bridging them together and mediating the import of pre-assembled proteasome complexes through the nuclear pore. Involved in innate immunity by regulating the production of interleukin-6 (IL6) downstream of Toll-like receptor (TLR): acts by bridging the NF-kappa-B inhibitor NFKBIZ and the SWI/SNF complex, leading to promote induction of IL6. Also involved in adaptive immunity by promoting B-cell activation. Involved in brain development: required for the survival and proliferation of cerebral cortical progenitor cells. Involved in myogenesis: required for skeletal muscle formation and skeletal development, possibly by regulating expression of muscle differentiation factors. Also plays a role in facilitating interdigital tissue regression during limb development. This chain is Akirin-2, found in Mus musculus (Mouse).